The sequence spans 439 residues: Homogentisate 1,2-dioxygenase (439 aa).

Catalysis depends on His-293, which acts as the Proton acceptor. Fe cation contacts are provided by His-336 and Glu-342. Positions 351 and 372 each coordinate homogentisate. His-372 serves as a coordination point for Fe cation.

This sequence belongs to the homogentisate dioxygenase family. As to quaternary structure, hexamer; dimer of trimers. Fe cation serves as cofactor.

The catalysed reaction is homogentisate + O2 = 4-maleylacetoacetate + H(+). The protein operates within amino-acid degradation; L-phenylalanine degradation; acetoacetate and fumarate from L-phenylalanine: step 4/6. Involved in the catabolism of homogentisate (2,5-dihydroxyphenylacetate or 2,5-OH-PhAc), a central intermediate in the degradation of phenylalanine and tyrosine. Catalyzes the oxidative ring cleavage of the aromatic ring of homogentisate to yield maleylacetoacetate. This chain is Homogentisate 1,2-dioxygenase, found in Cupriavidus necator (strain ATCC 17699 / DSM 428 / KCTC 22496 / NCIMB 10442 / H16 / Stanier 337) (Ralstonia eutropha).